The chain runs to 259 residues: MASPLRLRSALALVTGAGSGIGRAVSVRLAKEGATVAACDLDRAAACETVWLLGGQGSEKVAPGGAHTAFQADVSEAGAVRRLLEQVQACFSRPPSVVVSCAGLTRDEFLLRMSEDDWDRVIAVNLKGIFLVTQAAAQALVSSGCRGSIINISSIVGKVGNVGQTNYAASKAGVIGLTQTAARELGRHGIRCNSVLPGFITTPMTQKVPQKVLDKVIGMIPMGHLGDPEDVADAVTFLASEDSGYITGASVEVTGGLYM.

Residues 13–21 and 40–41 each bind NAD(+); these read LVTGAGSGI and DL. Ser58 is subject to Phosphoserine. 72–74 contributes to the NAD(+) binding site; sequence ADV. Ser154 contributes to the substrate binding site. Position 158 is an N6-succinyllysine (Lys158). Tyr167 (proton acceptor) is an active-site residue. Residues 167 to 171 and 200 to 202 contribute to the NAD(+) site; these read YAASK and ITT. Lys171 bears the N6-succinyllysine mark.

The protein belongs to the short-chain dehydrogenases/reductases (SDR) family. Heterotetramer with CBR4; contains two molecules of HSD17B8 and CBR4.

Its subcellular location is the mitochondrion matrix. The catalysed reaction is a (3R)-3-hydroxyacyl-CoA + NAD(+) = a 3-oxoacyl-CoA + NADH + H(+). It catalyses the reaction 17beta-estradiol + NAD(+) = estrone + NADH + H(+). It carries out the reaction testosterone + NAD(+) = androst-4-ene-3,17-dione + NADH + H(+). The enzyme catalyses 17beta-hydroxy-5alpha-androstan-3-one + NAD(+) = 5alpha-androstan-3,17-dione + NADH + H(+). It functions in the pathway steroid biosynthesis; estrogen biosynthesis. It participates in lipid metabolism; fatty acid biosynthesis. The protein operates within lipid metabolism; mitochondrial fatty acid beta-oxidation. Required for the solubility and assembly of the heterotetramer 3-ketoacyl-[acyl carrier protein] (ACP) reductase functional complex (KAR or KAR1) that forms part of the mitochondrial fatty acid synthase (mtFAS). Alpha-subunit of the KAR complex that acts as scaffold protein required for the stability of carbonyl reductase type-4 (CBR4, beta-subunit of the KAR complex) and for its 3-ketoacyl-ACP reductase activity, thereby participating in mitochondrial fatty acid biosynthesis. Catalyzes the NAD-dependent conversion of (3R)-3-hydroxyacyl-CoA into 3-ketoacyl-CoA (3-oxoacyl-CoA) with no chain length preference; this enzymatic activity is not needed for the KAR function. Prefers (3R)-3-hydroxyacyl-CoA over (3S)-3-hydroxyacyl-CoA and displays enzymatic activity only in the presence of NAD(+). Cooperates with enoyl-CoA hydratase 1 in mitochondria, together they constitute an alternative route to the auxiliary enzyme pathways for the breakdown of Z-PUFA (cis polyunsaturated fatty acid) enoyl-esters. NAD-dependent 17-beta-hydroxysteroid dehydrogenase with highest activity towards estradiol (17beta-estradiol or E2). Has very low activity towards testosterone and dihydrotestosterone (17beta-hydroxy-5alpha-androstan-3-one). Primarily an oxidative enzyme, it can switch to a reductive mode determined in the appropriate physiologic milieu and catalyze the reduction of estrone (E1) to form biologically active 17beta-estradiol. This is (3R)-3-hydroxyacyl-CoA dehydrogenase (HSD17B8) from Canis lupus familiaris (Dog).